The following is a 918-amino-acid chain: Band 3 anion exchange protein (918 aa).

Residues 1–48 (MENDLSFGEDVMSYEEESDSAFPSPIRPTPPGHSGNYDLEQSRQEEDS) form a disordered region. At 1–392 (MENDLSFGED…ISDFTDALDP (392 aa)) the chain is on the cytoplasmic side. A helical transmembrane segment spans residues 393 to 416 (QVLAAVIFIYFAALSPAITFGGLL). Over 417-424 (ADKTEHMM) the chain is Extracellular. The helical transmembrane segment at 425–445 (GVSELMISTCVQGIIFAFIAA) threads the bilayer. The Cytoplasmic portion of the chain corresponds to 446-448 (QPT). A discontinuously helical membrane pass occupies residues 449-465 (LVIGFSGPLLVFEEAFF). Residues 466-474 (AFCKSQEIE) lie on the Extracellular side of the membrane. A helical membrane pass occupies residues 475–495 (YIVGRIWVGLWLVIIVVVIVA). The Cytoplasmic portion of the chain corresponds to 496 to 507 (VEGSFLVKFISR). A helical transmembrane segment spans residues 508 to 530 (FTQEIFSILISLIFIYETFSKLG). At 531–583 (KIFKAHPLVLNYEHLNDSLDNPFHPVVKEHIEYHEDGNKTVHEVIHERAYPNT) the chain is on the extracellular side. Residues Asn546 and Asn568 are each glycosylated (N-linked (GlcNAc...) asparagine). A helical membrane pass occupies residues 584 to 604 (ALLSMCLMFGCFFIAYFLRQF). Residues 605 to 615 (KNGHFLPGPIR) are Cytoplasmic-facing. Residues 616 to 636 (RMIGDFGVPIAIFFMIAVDIT) traverse the membrane as a helical segment. Over 637-676 (IEDAYTQKLVVPKGLMVSNPNARGWFINPLGEKKPFPAWM) the chain is Extracellular. The helical transmembrane segment at 677-697 (MGACCVPALLVFILIFLESQI) threads the bilayer. At 698 to 713 (TTLIVSKPERKMVKGS) the chain is on the cytoplasmic side. Residues 714–732 (GFHLDLLILVTMGGIASLF) form a helical membrane-spanning segment. A discontinuously helical transmembrane segment spans residues 733–750 (GVPWLSAATVRSVTHANA). Topologically, residues 751–769 (LTVMSKGPKPEIEKVLEQR) are cytoplasmic. 2 helical membrane-spanning segments follow: residues 770 to 790 (ISGM…PILK) and 791 to 809 (MIPM…ITSL). At 810–847 (SGIQMWDRMLLLIVPRKYYPADAYAQRVTTMKMHLFTL) the chain is on the cytoplasmic side. The segment at residues 848–878 (IQMVCLGALWMVKMSAFSLALPFVLILTIPL) is an intramembrane region (discontinuously helical). The S-palmitoyl cysteine moiety is linked to residue Cys852. Over 879 to 918 (RMAITGTLFTDKEMKCLDASDGKVKFEEEPGEDMYESPLP) the chain is Cytoplasmic.

Belongs to the anion exchanger (TC 2.A.31) family. In terms of assembly, a dimer in solution, it spans the membrane asymmetrically and appears to be tetrameric.

The protein localises to the cell membrane. It carries out the reaction hydrogencarbonate(in) + chloride(out) = hydrogencarbonate(out) + chloride(in). Functionally, functions both as a transporter that mediates electroneutral anion exchange across the cell membrane and as a structural protein. Major integral membrane glycoprotein of the erythrocyte membrane; required for normal flexibility and stability of the erythrocyte membrane and for normal erythrocyte shape via the interactions of its cytoplasmic domain with cytoskeletal proteins, glycolytic enzymes, and hemoglobin. Functions as a transporter that mediates the 1:1 exchange of inorganic anions across the erythrocyte membrane. Mediates chloride-bicarbonate exchange in the kidney, and is required for normal acidification of the urine. The chain is Band 3 anion exchange protein (slc4a1) from Oncorhynchus mykiss (Rainbow trout).